A 131-amino-acid chain; its full sequence is Profilin-2 (131 aa).

The protein belongs to the profilin family. As to quaternary structure, occurs in many kinds of cells as a complex with monomeric actin in a 1:1 ratio. Expressed in the intestinal wall, the spermatheca, and the pharynx.

The protein resides in the cytoplasm. It localises to the cytoskeleton. In terms of biological role, binds to actin and affects the structure of the cytoskeleton. At high concentrations, profilin prevents the polymerization of actin, whereas it enhances it at low concentrations. By binding to PIP2, it inhibits the formation of IP3 and DG. This is Profilin-2 (pfn-2) from Caenorhabditis elegans.